A 294-amino-acid polypeptide reads, in one-letter code: Acetylglutamate kinase (294 aa).

Substrate contacts are provided by residues 66-67 (GG), Arg88, and Asn193.

It belongs to the acetylglutamate kinase family. ArgB subfamily.

The protein resides in the cytoplasm. The catalysed reaction is N-acetyl-L-glutamate + ATP = N-acetyl-L-glutamyl 5-phosphate + ADP. It participates in amino-acid biosynthesis; L-arginine biosynthesis; N(2)-acetyl-L-ornithine from L-glutamate: step 2/4. Catalyzes the ATP-dependent phosphorylation of N-acetyl-L-glutamate. The chain is Acetylglutamate kinase from Agrobacterium fabrum (strain C58 / ATCC 33970) (Agrobacterium tumefaciens (strain C58)).